The following is a 340-amino-acid chain: Dihydroorotate dehydrogenase (quinone) (340 aa).

Residues 63-67 (AGLDK) and threonine 87 contribute to the FMN site. Lysine 67 lines the substrate pocket. 112–116 (NRMGF) is a binding site for substrate. 2 residues coordinate FMN: asparagine 140 and asparagine 173. Position 173 (asparagine 173) interacts with substrate. Catalysis depends on serine 176, which acts as the Nucleophile. Asparagine 178 is a substrate binding site. FMN is bound by residues lysine 218 and threonine 246. 247–248 (NT) is a binding site for substrate. Residues glycine 269, glycine 298, and 319-320 (YT) each bind FMN.

Belongs to the dihydroorotate dehydrogenase family. Type 2 subfamily. In terms of assembly, monomer. It depends on FMN as a cofactor.

It is found in the cell membrane. The enzyme catalyses (S)-dihydroorotate + a quinone = orotate + a quinol. It participates in pyrimidine metabolism; UMP biosynthesis via de novo pathway; orotate from (S)-dihydroorotate (quinone route): step 1/1. In terms of biological role, catalyzes the conversion of dihydroorotate to orotate with quinone as electron acceptor. This is Dihydroorotate dehydrogenase (quinone) from Methylococcus capsulatus (strain ATCC 33009 / NCIMB 11132 / Bath).